A 566-amino-acid chain; its full sequence is Transcription factor P14E8.02 (566 aa).

The interval 1–32 (MNISSQNVLLPSPIPSSSPMASHKKSWLSKHP) is disordered. At Ser73 the chain carries Phosphoserine. Positions 86-137 (NKIGRSSQQCDHVLSTVDKAISRVHAIVTCTQDRMIIECVGWNGMIVSDKMR) constitute an FHA domain. Disordered regions lie at residues 191–217 (EENREPMSPSPQEALPLMPSSPPSQDY), 269–291 (DCSKNTQLKPSFLPKNTDDLLNG), 312–334 (ESDDLDKNEEISEGEEYTPIEES), and 364–437 (FTNH…TKEN). Residues 314–330 (DDLDKNEEISEGEEYTP) show a composition bias toward acidic residues. Composition is skewed to polar residues over residues 373–383 (NSNITTSNDSP) and 414–428 (DENTNDSNESLPSSH). Ser379 and Ser382 each carry phosphoserine.

The protein belongs to the PLM2/TOS4 family.

Its subcellular location is the nucleus. In terms of biological role, probable transcriptional regulatory protein Required for G1/S progression. The chain is Transcription factor P14E8.02 from Schizosaccharomyces pombe (strain 972 / ATCC 24843) (Fission yeast).